The chain runs to 471 residues: E3 SUMO-protein ligase EGR2 (471 aa).

The span at 127–143 shows a compositional bias: low complexity; the sequence is PASTTASSNVTSASPNP. The disordered stretch occupies residues 127–177; the sequence is PASTTASSNVTSASPNPLATGPLGVCTMSQTQPDLDHLYSPPPPPPYSGCA. Lys246 bears the N6-acetyllysine; by EP300 mark. 2 disordered regions span residues 273 to 301 and 313 to 336; these read GGPS…AAAA and RPIL…RPYP. Residues 280-289 show a composition bias toward gly residues; sequence TGPGASGGSE. 3 C2H2-type zinc fingers span residues 335–359, 365–387, and 393–415; these read YPCP…IRIH, FQCR…IRTH, and FACD…TKIH. Residues 406 to 471 are disordered; it reads DERKRHTKIH…GPCSSRTRTP (66 aa). Positions 410 to 420 are enriched in basic residues; sequence RHTKIHLRQKE. A compositionally biased stretch (low complexity) spans 424–437; sequence SAPSSSVPAASTAS.

This sequence belongs to the EGR C2H2-type zinc-finger protein family. Interacts with HCFC1. Interacts with WWP2. Interacts with UBC9. Interacts with CITED1. Interacts (via phosphorylated form) with SFN. In terms of processing, ubiquitinated by WWP2 leading to proteasomal degradation. Post-translationally, acetylated at Lys-246. May be deacetylated by HDAC6, HDAC10 or SIRT1.

The protein resides in the nucleus. Its pathway is protein modification; protein sumoylation. In terms of biological role, sequence-specific DNA-binding transcription factor. Plays a role in hindbrain segmentation by regulating the expression of a subset of homeobox containing genes and in Schwann cell myelination by regulating the expression of genes involved in the formation and maintenance of myelin. Binds to two EGR2-consensus sites EGR2A (5'-CTGTAGGAG-3') and EGR2B (5'-ATGTAGGTG-3') in the HOXB3 enhancer and promotes HOXB3 transcriptional activation. Binds to specific DNA sites located in the promoter region of HOXA4, HOXB2 and ERBB2. Regulates hindbrain segmentation by controlling the expression of Hox genes, such as HOXA4, HOXB3 and HOXB2, and thereby specifying odd and even rhombomeres. Promotes the expression of HOXB3 in the rhombomere r5 in the hindbrain. Regulates myelination in the peripheral nervous system after birth, possibly by regulating the expression of myelin proteins, such as MPZ, and by promoting the differentiation of Schwann cells. Involved in the development of the jaw openener musculature, probably by playing a role in its innervation through trigeminal motor neurons. May play a role in adipogenesis, possibly by regulating the expression of CEBPB. Functionally, E3 SUMO-protein ligase helping SUMO1 conjugation to its coregulators NAB1 and NAB2, whose sumoylation down-regulates EGR2 transcriptional activity. In Sus scrofa (Pig), this protein is E3 SUMO-protein ligase EGR2 (EGR2).